Here is a 101-residue protein sequence, read N- to C-terminus: Iron-sulfur cluster assembly protein CyaY (101 aa).

This sequence belongs to the frataxin family.

In terms of biological role, involved in iron-sulfur (Fe-S) cluster assembly. May act as a regulator of Fe-S biogenesis. The protein is Iron-sulfur cluster assembly protein CyaY of Rickettsia akari (strain Hartford).